Here is a 61-residue protein sequence, read N- to C-terminus: Arabinogalactan protein 15 (61 aa).

Residues 1–22 form the signal peptide; it reads MAISKASIVVLMMVIISVVASA. Residue Gln-23 is modified to Pyrrolidone carboxylic acid. 4-hydroxyproline is present on residues Pro-27, Pro-29, and Pro-31. Pro-27, Pro-29, and Pro-31 each carry an O-linked (Ara...) hydroxyproline glycan. Ser-35 carries the GPI-anchor amidated serine lipid modification. Positions 36 to 61 are cleaved as a propeptide — removed in mature form; the sequence is SAISASFVSAGVAAVAALVFGSALRI.

Belongs to the AG-peptide AGP family. Contains 4-hydroxyproline; hydroxylated on Pro-27, Pro-29 and Pro-31. Post-translationally, O-glycosylated on hydroxyprolines; noncontiguous hydroxylproline residues are glycosylated with arabinogalactan. As to expression, expressed in reproductive tissues. Expressed in chalaza, funiculus, stigma, septum, style, integument and transmitting tract.

The protein resides in the cell membrane. Proteoglycan that seems to be implicated in diverse developmental roles such as differentiation, cell-cell recognition, embryogenesis and programmed cell death. The polypeptide is Arabinogalactan protein 15 (Arabidopsis thaliana (Mouse-ear cress)).